A 595-amino-acid polypeptide reads, in one-letter code: DNA-binding protein REB1 (595 aa).

Basic and acidic residues-rich tracts occupy residues 25–46 (KSGE…KEQD) and 54–71 (DPGR…RDAN). The tract at residues 25-208 (KSGEDDAVNK…IDDHVDDVSV (184 aa)) is disordered. Low complexity predominate over residues 75-84 (AVAAAAVAAA). Residues 114–123 (KKSKKNKNKL) are compositionally biased toward basic residues. Over residues 163 to 176 (NIASQHPDFQQYLN) the composition is skewed to polar residues. A compositionally biased stretch (basic and acidic residues) spans 182-205 (EPKKEKSEERSYGDLSNIDDHVDD). The region spanning 333–384 (HIFEQRGKWTPEEDAELARWCAEKEGQWSNIGKVLGRMPEDCRDRWRNYVKC) is the HTH myb-type domain. The H-T-H motif DNA-binding region spans 360-382 (WSNIGKVLGRMPEDCRDRWRNYV). A Myb-like domain is found at 385–490 (GPNRAANKWS…QCRYKWNKLL (106 aa)). A disordered region spans residues 414–456 (TAYEDGEDDEMKDSSTKIEDSGDADMLDVQDSDKKPSISNSKK). Over residues 434 to 443 (SGDADMLDVQ) the composition is skewed to acidic residues.

The protein resides in the nucleus. DNA-binding protein that recognizes sites within both the enhancer and the promoter of rRNA transcription, as well as upstream of many genes transcribed by RNA polymerase II. It is essential for cell growth. May stimulate or inhibit transcription. Specifically recognizes the sequence 5'-CCGGGTA-3' or 5'-CGGGTRR-3' (where R is any purine). This Kluyveromyces lactis (strain ATCC 8585 / CBS 2359 / DSM 70799 / NBRC 1267 / NRRL Y-1140 / WM37) (Yeast) protein is DNA-binding protein REB1 (REB1).